Reading from the N-terminus, the 147-residue chain is D-aminoacyl-tRNA deacylase (147 aa).

Positions 136 to 137 (GP) match the Gly-cisPro motif, important for rejection of L-amino acids motif.

Belongs to the DTD family. Homodimer.

It localises to the cytoplasm. It catalyses the reaction glycyl-tRNA(Ala) + H2O = tRNA(Ala) + glycine + H(+). It carries out the reaction a D-aminoacyl-tRNA + H2O = a tRNA + a D-alpha-amino acid + H(+). Functionally, an aminoacyl-tRNA editing enzyme that deacylates mischarged D-aminoacyl-tRNAs. Also deacylates mischarged glycyl-tRNA(Ala), protecting cells against glycine mischarging by AlaRS. Acts via tRNA-based rather than protein-based catalysis; rejects L-amino acids rather than detecting D-amino acids in the active site. By recycling D-aminoacyl-tRNA to D-amino acids and free tRNA molecules, this enzyme counteracts the toxicity associated with the formation of D-aminoacyl-tRNA entities in vivo and helps enforce protein L-homochirality. This Nitratiruptor sp. (strain SB155-2) protein is D-aminoacyl-tRNA deacylase.